We begin with the raw amino-acid sequence, 1245 residues long: Structural polyprotein (1245 aa).

Positions 1–106 (MNRGFFNMLG…KTKPGKRQRM (106 aa)) are disordered. Residues 37–70 (GLASQIQQLTTAVSALVIGQATRPQNPRPRPPPR) form a host transcription inhibition region. The segment covering 38–49 (LASQIQQLTTAV) has biased composition (polar residues). The Nuclear localization signal signature appears at 63–100 (PRPRPPPRQKKQAPKQPPKPKKPKPQEKKKKQPAKTKP). Over residues 67–106 (PPPRQKKQAPKQPPKPKKPKPQEKKKKQPAKTKPGKRQRM) the composition is skewed to basic residues. Positions 86-115 (KPQEKKKKQPAKTKPGKRQRMALKLEADRL) are binding to the viral RNA. The segment at 100–114 (PGKRQRMALKLEADR) is ribosome-binding. One can recognise a Peptidase S3 domain in the interval 114-264 (RLFDVKNEDG…KTTPEGTEEW (151 aa)). Catalysis depends on H141, which acts as the Charge relay system. Residues 146 to 156 (IDHPVLSKLKF) carry the Nuclear export signal motif. The segment at 157 to 162 (TKSSAY) is interaction with spike glycoprotein E2. D163 serves as the catalytic Charge relay system. A dimerization of the capsid protein region spans residues 185–195 (PEGFYNWHHGA). S215 functions as the Charge relay system in the catalytic mechanism. Residues 221 to 225 (DNSGR) are dimerization of the capsid protein. Positions 249–253 (SKGKT) are interaction with spike glycoprotein E2. Residues 265–279 (SAAPLVTAMCLLGNV) form a functions as an uncleaved signal peptide for the precursor of protein E3/E2 region. An N-linked (GlcNAc...) asparagine; by host glycan is attached at N278. Intrachain disulfides connect C283-C289, C480-C594, C529-C554, and C531-C548. Over 329 to 690 (SVTDDFTLTS…HEIVQHYYHR (362 aa)) the chain is Extracellular. Residue N524 is glycosylated (N-linked (GlcNAc...) asparagine; by host). The N-linked (GlcNAc...) asparagine; by host glycan is linked to N646. The chain crosses the membrane as a helical span at residues 691 to 718 (HPVYTILAVASAAVAMMIGVTVAALCAC). Residues 719–723 (KARRE) form an interaction with the capsid protein region. Over 719–751 (KARRECLTPYALAPNAVIPTSLALLCCVRSANA) the chain is Cytoplasmic. S-palmitoyl cysteine; by host attachment occurs at residues C724, C744, and C745. C724 and C745 are disulfide-bonded. Residues 752–763 (ETFTETMSYFWS) lie on the Extracellular side of the membrane. A helical transmembrane segment spans residues 764 to 784 (NSQPFFWVQLCIPLAAVIVLM). A topological domain (cytoplasmic) is located at residue R785. The chain crosses the membrane as a helical span at residues 786 to 806 (CCSCCLPFLVVAGAYLAKVDA). Topologically, residues 807-1214 (YEHATTVPNV…QAAISKTSWS (408 aa)) are extracellular. Disulfide bonds link C855/C920, C868/C900, C869/C902, and C874/C884. The E1 fusion peptide loop stretch occupies residues 890–907 (VYPFMWGGAQCFCDSENS). N-linked (GlcNAc...) asparagine; by host glycans are attached at residues N945 and N1051. Disulfide bonds link C1065-C1077, C1107-C1182, C1112-C1186, and C1134-C1176. Residues 1215 to 1239 (WLFALFGGASSLLIIGLTIFACSMM) form a helical membrane-spanning segment. At 1240 to 1245 (LTSTRR) the chain is on the cytoplasmic side.

As to quaternary structure, homodimer. Homomultimer. Interacts with host karyopherin KPNA4; this interaction allows the nuclear import of the viral capsid protein. Interacts with spike glycoprotein E2. Interacts with host IRAK1; the interaction leads to inhibition of IRAK1-dependent signaling. In terms of assembly, the precursor of protein E3/E2 and E1 form a heterodimer shortly after synthesis. The precursor of protein E3/E2 and E1 form a heterodimer shortly after synthesis. Processing of the precursor of protein E3/E2 into E2 and E3 results in a heterodimer of the spike glycoproteins E2 and E1. Spike at virion surface are constituted of a trimer of E2-E1 heterodimers. After target cell attachment and endocytosis, E1 change conformation to form homotrimers. E2-E1 heterodimers interact with host VLDLR or LRP8/APOER2 to mediate viral entry. Interacts with 6K protein. As to quaternary structure, processing of the precursor of protein E3/E2 into E2 and E3 results in a heterodimer of the spike glycoproteins E2 and E1. Spike at virion surface are constituted of a trimer of E2-E1 heterodimers. E2-E1 heterodimers interact with host VLDLR or LRP8/APOER2 to mediate viral entry. Interacts with 6K protein. Interacts with the capsid protein. In terms of assembly, oligomer. Interacts with spike glycoprotein E1. Interacts with spike glycoprotein E2. Post-translationally, structural polyprotein: Specific enzymatic cleavages in vivo yield mature proteins. Capsid protein is auto-cleaved during polyprotein translation, unmasking a signal peptide at the N-terminus of the precursor of E3/E2. The remaining polyprotein is then targeted to the host endoplasmic reticulum, where host signal peptidase cleaves it into pE2, 6K and E1 proteins. pE2 is further processed to mature E3 and E2 by host furin in trans-Golgi vesicle. In terms of processing, palmitoylated via thioester bonds. These palmitoylations may induce disruption of the C-terminus transmembrane. This would result in the reorientation of E2 C-terminus from lumenal to cytoplasmic side. N-glycosylated. Post-translationally, palmitoylated via thioester bonds.

Its subcellular location is the virion. The protein localises to the host cytoplasm. It is found in the host cell membrane. It localises to the host nucleus. The protein resides in the virion membrane. Its subcellular location is the host Golgi apparatus. The protein localises to the host trans-Golgi network. It is found in the host endoplasmic reticulum. It carries out the reaction Autocatalytic release of the core protein from the N-terminus of the togavirus structural polyprotein by hydrolysis of a -Trp-|-Ser- bond.. Functionally, forms an icosahedral capsid with a T=4 symmetry composed of 240 copies of the capsid protein surrounded by a lipid membrane through which penetrate 80 spikes composed of trimers of E1-E2 heterodimers. The capsid protein binds to the viral RNA genome at a site adjacent to a ribosome binding site for viral genome translation following genome release. Possesses a protease activity that results in its autocatalytic cleavage from the nascent structural protein. Following its self-cleavage, the capsid protein transiently associates with ribosomes, and within several minutes the protein binds to viral RNA and rapidly assembles into icosahedric core particles. The resulting nucleocapsid eventually associates with the cytoplasmic domain of the spike glycoprotein E2 at the cell membrane, leading to budding and formation of mature virions. In case of infection, new virions attach to target cells and after clathrin-mediated endocytosis their membrane fuses with the host endosomal membrane. This leads to the release of the nucleocapsid into the cytoplasm, followed by an uncoating event necessary for the genomic RNA to become accessible. The uncoating might be triggered by the interaction of capsid proteins with ribosomes. Binding of ribosomes would release the genomic RNA since the same region is genomic RNA-binding and ribosome-binding. Specifically inhibits interleukin-1 receptor-associated kinase 1/IRAK1-dependent signaling during viral entry, representing a means by which the alphaviruses may evade innate immune detection and activation prior to viral gene expression. Provides the signal sequence for the translocation of the precursor of protein E3/E2 to the host endoplasmic reticulum. Furin-cleaved E3 remains associated with spike glycoprotein E1 and mediates pH protection of the latter during the transport via the secretory pathway. After virion release from the host cell, the assembly protein E3 is gradually released in the extracellular space. In terms of biological role, plays a role in viral attachment to target host cell, by binding to the cell receptors VLDLR or LRP8/APOER2. Synthesized as a pE2 precursor which is processed by furin at the cell membrane just before virion budding, giving rise to E2-E1 heterodimer. The pE2-E1 heterodimer is stable, whereas E2-E1 is unstable and dissociate at low pH. pE2 is processed at the last step, presumably to avoid E1 fusion activation before its final export to cell surface. E2 C-terminus contains a transitory transmembrane that would be disrupted by palmitoylation, resulting in reorientation of the C-terminal tail from lumenal to cytoplasmic side. This step is critical since E2 C-terminus is involved in budding by interacting with capsid proteins. This release of E2 C-terminus in cytoplasm occurs lately in protein export, and precludes premature assembly of particles at the endoplasmic reticulum membrane. Its function is as follows. Acts as a viroporin that participates in virus glycoprotein processing and transport to the plasma membrane, cell permeabilization and budding of viral particles. Disrupts the calcium homeostasis of the cell, probably at the endoplasmic reticulum level resulting in the increased levels of cytoplasmic calcium. Because of its lipophilic properties, the 6K protein is postulated to influence the selection of lipids that interact with the transmembrane domains of the glycoproteins, which, in turn, affects the deformability of the bilayer required for the extreme curvature that occurs as budding proceeds. Present in low amount in virions, about 3% compared to viral glycoproteins. Functionally, class II viral fusion protein. Fusion activity is inactive as long as E1 is bound to E2 in mature virion. After virus attachment to target cell via host VLDLR or LRP8/APOER2 and endocytosis, acidification of the endosome induces dissociation of E1/E2 heterodimer and concomitant trimerization of the E1 subunits. This E1 trimer is fusion active, and promotes release of viral nucleocapsid in cytoplasm after endosome and viral membrane fusion. Efficient fusion requires the presence of cholesterol and sphingolipid in the target membrane. This Acrocephalus scirpaceus (Eurasian reed-warbler) protein is Structural polyprotein.